Here is a 578-residue protein sequence, read N- to C-terminus: Arginine--tRNA ligase (578 aa).

The 'HIGH' region motif lies at 127–137 (PNLAKEMHVGH).

This sequence belongs to the class-I aminoacyl-tRNA synthetase family. As to quaternary structure, monomer.

The protein localises to the cytoplasm. The enzyme catalyses tRNA(Arg) + L-arginine + ATP = L-arginyl-tRNA(Arg) + AMP + diphosphate. The sequence is that of Arginine--tRNA ligase from Pseudomonas savastanoi pv. phaseolicola (strain 1448A / Race 6) (Pseudomonas syringae pv. phaseolicola (strain 1448A / Race 6)).